Consider the following 205-residue polypeptide: Dephospho-CoA kinase (205 aa).

In terms of domain architecture, DPCK spans 4 to 203 (KIGITGGIGS…QKIHYLCSAK (200 aa)). 12–17 (GSGKSV) contacts ATP.

It belongs to the CoaE family.

It is found in the cytoplasm. It catalyses the reaction 3'-dephospho-CoA + ATP = ADP + CoA + H(+). It participates in cofactor biosynthesis; coenzyme A biosynthesis; CoA from (R)-pantothenate: step 5/5. Its function is as follows. Catalyzes the phosphorylation of the 3'-hydroxyl group of dephosphocoenzyme A to form coenzyme A. This chain is Dephospho-CoA kinase, found in Bacteroides fragilis (strain ATCC 25285 / DSM 2151 / CCUG 4856 / JCM 11019 / LMG 10263 / NCTC 9343 / Onslow / VPI 2553 / EN-2).